The chain runs to 132 residues: ATP synthase epsilon chain (132 aa).

Belongs to the ATPase epsilon chain family. As to quaternary structure, F-type ATPases have 2 components, CF(1) - the catalytic core - and CF(0) - the membrane proton channel. CF(1) has five subunits: alpha(3), beta(3), gamma(1), delta(1), epsilon(1). CF(0) has three main subunits: a, b and c.

The protein resides in the cell inner membrane. Functionally, produces ATP from ADP in the presence of a proton gradient across the membrane. This is ATP synthase epsilon chain from Jannaschia sp. (strain CCS1).